An 877-amino-acid polypeptide reads, in one-letter code: SRP-independent targeting protein 1 (877 aa).

Ser309, Ser310, Ser311, Ser332, and Ser334 each carry phosphoserine. Disordered stretches follow at residues 369 to 414 (LRKQ…PSND), 446 to 521 (DDYT…DVLS), and 550 to 579 (KPFN…SNHF). The span at 389-402 (RSQSYSSSNMSRSP) shows a compositional bias: low complexity. The stretch at 412–441 (SNDELVYDELNNQINEVQDRAKNEEIVLYN) forms a coiled coil. A compositionally biased stretch (basic and acidic residues) spans 447–462 (DYTKERGEQEQDRTSY). The span at 470-501 (YDDEEGGNEDNYDDDEDDDDDDDDDDESDDEG) shows a compositional bias: acidic residues. 2 stretches are compositionally biased toward polar residues: residues 510-521 (LSRSGSSTDVLS) and 551-579 (PFNQ…SNHF). Residues Lys668 and Lys670 each participate in a glycyl lysine isopeptide (Lys-Gly) (interchain with G-Cter in ubiquitin) cross-link. Phosphoserine is present on residues Ser692, Ser694, and Ser706. The tract at residues 773–815 (SLPKEREDDNDSTNSTIVPNHPDNDNYNDNDNDNNTGINSNNF) is disordered. Over residues 805 to 815 (DNNTGINSNNF) the composition is skewed to low complexity. Residue Ser841 is modified to Phosphoserine.

As to quaternary structure, interacts with ENV10/SND2.

It is found in the cytoplasm. Functionally, functions in the SND pathway, a SRP (signal recognition particle) and GET (guided entry of tail-anchored proteins) independent pathway for targeting a broad range of substrate proteins to the endoplasmic reticulum. SND functions in parallel to GET in targeting proteins with downstream hydrophobic motifs. The protein is SRP-independent targeting protein 1 of Saccharomyces cerevisiae (strain ATCC 204508 / S288c) (Baker's yeast).